Reading from the N-terminus, the 106-residue chain is MVVTAYPKSSAGMGVTVLPEYLKQSSYEAYSRPYSAFFLSGCTKQERSPLLARRLVDAWLSFHSILMINEEVSDWEQLSDHYTRRSLFKTIAFRNLQREEEYRPGG.

It is found in the mitochondrion. This is an uncharacterized protein from Arabidopsis thaliana (Mouse-ear cress).